Here is a 746-residue protein sequence, read N- to C-terminus: Protein C-mannosyl-transferase DPY19L1 (746 aa).

The interval 1–68 is disordered; the sequence is MVLQARSKHR…RAETAAPAPD (68 aa). A compositionally biased stretch (pro residues) spans 14–27; the sequence is PRPPRPARSSPPPL. Transmembrane regions (helical) follow at residues 93-113, 139-159, 227-247, 248-268, 308-328, 329-349, 357-377, 378-398, 405-425, 481-501, 520-540, and 562-582; these read STLL…TQLF, YSYF…WMIM, ACFY…LFFI, YGTY…CFFF, YRGS…PWQF, AQFV…VGYI, IIYT…GNSM, LLTS…AMKP, VSEL…TVTL, LLLP…INDM, GELV…ILIM, and LFGW…VLAA.

The protein belongs to the dpy-19 family.

The protein resides in the endoplasmic reticulum membrane. The enzyme catalyses L-tryptophyl-[protein] + a di-trans,poly-cis-dolichyl beta-D-mannosyl phosphate = C-alpha-D-mannosyl-L-tryptophyl-[protein] + a di-trans,poly-cis-dolichyl phosphate + H(+). It participates in protein modification; protein glycosylation. Its function is as follows. C-mannosyltransferase that mediates the C-mannosylation tryptophan residues on target proteins. The reaction occurs on the luminal side of the endoplasmic reticulum and involves the transfer of a mannose unit from a dolichylphosphate mannose (Dol-P-Man) donor to an acceptor protein containing a WxxW consensus sequence. C-mannosylates the first two tryptophans in the WxxWxxWxxC sequence motif in thrombospondin (TSP) type-1 repeats of UNC5A. Regulates neurite extension during development. This chain is Protein C-mannosyl-transferase DPY19L1 (Dpy19l1), found in Rattus norvegicus (Rat).